A 506-amino-acid chain; its full sequence is Histidine ammonia-lyase (506 aa).

The segment at residues 143 to 145 (ASG) is a cross-link (5-imidazolinone (Ala-Gly)). Ser144 carries the 2,3-didehydroalanine (Ser) modification.

Belongs to the PAL/histidase family. Contains an active site 4-methylidene-imidazol-5-one (MIO), which is formed autocatalytically by cyclization and dehydration of residues Ala-Ser-Gly.

It is found in the cytoplasm. The catalysed reaction is L-histidine = trans-urocanate + NH4(+). It participates in amino-acid degradation; L-histidine degradation into L-glutamate; N-formimidoyl-L-glutamate from L-histidine: step 1/3. The sequence is that of Histidine ammonia-lyase from Salmonella dublin (strain CT_02021853).